We begin with the raw amino-acid sequence, 981 residues long: Bifunctional glutamine synthetase adenylyltransferase/adenylyl-removing enzyme (981 aa).

An adenylyl removase region spans residues 1–473 (MTMPLPSIEQ…RSVFNNLIGF (473 aa)). The adenylyl transferase stretch occupies residues 479–981 (ADDSDNAWSD…HQIWQKLFFE (503 aa)).

It belongs to the GlnE family. Mg(2+) serves as cofactor.

The enzyme catalyses [glutamine synthetase]-O(4)-(5'-adenylyl)-L-tyrosine + phosphate = [glutamine synthetase]-L-tyrosine + ADP. The catalysed reaction is [glutamine synthetase]-L-tyrosine + ATP = [glutamine synthetase]-O(4)-(5'-adenylyl)-L-tyrosine + diphosphate. Functionally, involved in the regulation of glutamine synthetase GlnA, a key enzyme in the process to assimilate ammonia. When cellular nitrogen levels are high, the C-terminal adenylyl transferase (AT) inactivates GlnA by covalent transfer of an adenylyl group from ATP to specific tyrosine residue of GlnA, thus reducing its activity. Conversely, when nitrogen levels are low, the N-terminal adenylyl removase (AR) activates GlnA by removing the adenylyl group by phosphorolysis, increasing its activity. The regulatory region of GlnE binds the signal transduction protein PII (GlnB) which indicates the nitrogen status of the cell. This Mannheimia succiniciproducens (strain KCTC 0769BP / MBEL55E) protein is Bifunctional glutamine synthetase adenylyltransferase/adenylyl-removing enzyme.